The following is a 62-amino-acid chain: Toxin Tb2 (62 aa).

The region spanning 1-62 (KEGYAMDHEG…KVWDYATNKC (62 aa)) is the LCN-type CS-alpha/beta domain. 4 disulfides stabilise this stretch: cysteine 11–cysteine 62, cysteine 15–cysteine 38, cysteine 23–cysteine 43, and cysteine 27–cysteine 45. Cysteine 62 is modified (cysteine amide).

This sequence belongs to the long (4 C-C) scorpion toxin superfamily. Sodium channel inhibitor family. Beta subfamily. As to expression, expressed by the venom gland.

The protein resides in the secreted. Functionally, beta toxins bind voltage-independently at site-4 of sodium channels (Nav) and shift the voltage of activation toward more negative potentials thereby affecting sodium channel activation and promoting spontaneous and repetitive firing. This toxin is active on mammals. This chain is Toxin Tb2, found in Tityus bahiensis (Brazilian scorpion).